We begin with the raw amino-acid sequence, 207 residues long: uncharacterized protein (207 aa).

This is an uncharacterized protein from Methanocaldococcus jannaschii (strain ATCC 43067 / DSM 2661 / JAL-1 / JCM 10045 / NBRC 100440) (Methanococcus jannaschii).